We begin with the raw amino-acid sequence, 1121 residues long: MDSLWAAIAALFVAAAVVVRGAAAADDAQLLEEFRQAVPNQAALKGWSGGDGACRFPGAGCRNGRLTSLSLAGVPLNAEFRAVAATLLQLGSVEVLSLRGANVSGALSAAGGARCGSKLQALDLSGNAALRGSVADVAALASACGGLKTLNLSGDAVGAAKVGGGGGPGFAGLDSLDLSNNKITDDSDLRWMVDAGVGAVRWLDLALNRISGVPEFTNCSGLQYLDLSGNLIVGEVPGGALSDCRGLKVLNLSFNHLAGVFPPDIAGLTSLNALNLSNNNFSGELPGEAFAKLQQLTALSLSFNHFNGSIPDTVASLPELQQLDLSSNTFSGTIPSSLCQDPNSKLHLLYLQNNYLTGGIPDAVSNCTSLVSLDLSLNYINGSIPASLGDLGNLQDLILWQNELEGEIPASLSRIQGLEHLILDYNGLTGSIPPELAKCTKLNWISLASNRLSGPIPSWLGKLSYLAILKLSNNSFSGPIPPELGDCQSLVWLDLNSNQLNGSIPKELAKQSGKMNVGLIVGRPYVYLRNDELSSECRGKGSLLEFTSIRPDDLSRMPSKKLCNFTRMYVGSTEYTFNKNGSMIFLDLSYNQLDSAIPGELGDMFYLMIMNLGHNLLSGTIPSRLAEAKKLAVLDLSYNQLEGPIPNSFSALSLSEINLSNNQLNGTIPELGSLATFPKSQYENNTGLCGFPLPPCDHSSPRSSNDHQSHRRQASMASSIAMGLLFSLFCIIVIIIAIGSKRRRLKNEEASTSRDIYIDSRSHSATMNSDWRQNLSGTNLLSINLAAFEKPLQNLTLADLVEATNGFHIACQIGSGGFGDVYKAQLKDGKVVAIKKLIHVSGQGDREFTAEMETIGKIKHRNLVPLLGYCKAGEERLLVYDYMKFGSLEDVLHDRKKIGKKLNWEARRKIAVGAARGLAFLHHNCIPHIIHRDMKSSNVLIDEQLEARVSDFGMARLMSVVDTHLSVSTLAGTPGYVPPEYYQSFRCTTKGDVYSYGVVLLELLTGKPPTDSADFGEDNNLVGWVKQHTKLKITDVFDPELLKEDPSVELELLEHLKIACACLDDRPSRRPTMLKVMAMFKEIQAGSTVDSKTSSAAAGSIDEGGYGVLDMPLREAKEEKD.

A signal peptide spans 1 to 24 (MDSLWAAIAALFVAAAVVVRGAAA). Residues 54–61 (CRFPGAGC) carry the Cys pair 1 motif. LRR repeat units lie at residues 90–114 (LGSVEVLSLRGANVSGALSAAGGAR), 116–142 (GSKLQALDLSGNAALRGSVADVAALAS), 144–167 (CGGLKTLNLSGDAVGAAKVGGGGG), 170–193 (FAGLDSLDLSNNKITDDSDLRWMV), 197–221 (VGAVRWLDLALNRISGVPEFTNCSG), 223–243 (QYLDLSGNLIVGEVPGGALSD), 244–268 (CRGLKVLNLSFNHLAGVFPPDIAGL), 269–292 (TSLNALNLSNNNFSGELPGEAFAK), 294–317 (QQLTALSLSFNHFNGSIPDTVASL), 318–341 (PELQQLDLSSNTFSGTIPSSLCQD), 343–367 (NSKLHLLYLQNNYLTGGIPDAVSNC), 369–391 (SLVSLDLSLNYINGSIPASLGDL), 392–415 (GNLQDLILWQNELEGEIPASLSRI), 416–439 (QGLEHLILDYNGLTGSIPPELAKC), 441–463 (KLNWISLASNRLSGPIPSWLGKL), 464–487 (SYLAILKLSNNSFSGPIPPELGDC), and 489–511 (SLVWLDLNSNQLNGSIPKELAKQ). A glycan (N-linked (GlcNAc...) asparagine) is linked at Asn102. Asn151 is a glycosylation site (N-linked (GlcNAc...) asparagine). An N-linked (GlcNAc...) asparagine glycan is attached at Asn218. N-linked (GlcNAc...) asparagine glycosylation is found at Asn251, Asn275, Asn280, and Asn307. Asn366 and Asn381 each carry an N-linked (GlcNAc...) asparagine glycan. 2 N-linked (GlcNAc...) asparagine glycosylation sites follow: Asn473 and Asn501. Tyr525 serves as a coordination point for brassinolide. The LRR 18 repeat unit spans residues 541–564 (GSLLEFTSIRPDDLSRMPSKKLCN). N-linked (GlcNAc...) asparagine glycosylation is present at Asn564. Tyr569 serves as a coordination point for brassinolide. Residue Asn580 is glycosylated (N-linked (GlcNAc...) asparagine). 4 LRR repeats span residues 580 to 603 (NGSMIFLDLSYNQLDSAIPGELGD), 604 to 628 (MFYLMIMNLGHNLLSGTIPSRLAEA), 629 to 651 (KKLAVLDLSYNQLEGPIPNSFSA), and 652 to 676 (LSLSEINLSNNQLNGTIPELGSLAT). Residues Asn658, Asn665, and Asn684 are each glycosylated (N-linked (GlcNAc...) asparagine). The Cys pair 2 signature appears at 689–696 (CGFPLPPC). The segment at 693-712 (LPPCDHSSPRSSNDHQSHRR) is disordered. The chain crosses the membrane as a helical span at residues 719 to 739 (SIAMGLLFSLFCIIVIIIAIG). The region spanning 807–1083 (FHIACQIGSG…LKVMAMFKEI (277 aa)) is the Protein kinase domain. ATP-binding positions include 813 to 821 (IGSGGFGDV), Lys835, 881 to 883 (DYM), 887 to 890 (SLED), 933 to 938 (DMKSSN), and Asp951. Asp933 functions as the Proton acceptor in the catalytic mechanism.

This sequence belongs to the protein kinase superfamily. Ser/Thr protein kinase family. Interacts with BIP103 and BIP131. Interacts with BAK1. Interacts with BSK3. Interacts with SERK2. In terms of tissue distribution, highly expressed in shoots. Expressed at low levels in roots.

It is found in the cell membrane. The enzyme catalyses L-seryl-[protein] + ATP = O-phospho-L-seryl-[protein] + ADP + H(+). It catalyses the reaction L-threonyl-[protein] + ATP = O-phospho-L-threonyl-[protein] + ADP + H(+). In terms of biological role, receptor kinase involved brassinosteroid (BR) signal transduction. Regulates, in response to BR binding, a signaling cascade involved in plant development, promotion of cell elongation and flowering. Activates BR signaling by targeting and phosphorylating BSK3, a positive regulator of BR signaling. Forms at the plasma membrane a receptor complex with BAK1 which is activated in response to brassinolide. Phosphorylates BAK1. Phosphorylates REM4.1, which reduces REM4.1 binding affinity to BAK1 and allows the formation and subsequent activation of the BRI1-BAK1 receptor complex. Functions in various growth and developmental processes, such as internode elongation, bending of the lamina joint and skotomorphogenesis. Functions in internode elongation by inducing the formation of the intercalary meristem and the longitudinal elongation of internode cells. Involved in organ development through the control of cell division and elongation. Does not seem essential for organ pattern formation or organ initiation. This Oryza sativa subsp. japonica (Rice) protein is Brassinosteroid LRR receptor kinase BRI1.